The sequence spans 239 residues: ATP synthase subunit b (239 aa).

The segment covering 1-22 has biased composition (low complexity); the sequence is MYAQEAQQKPEAQQSAPAAEQP. A disordered region spans residues 1–64; sequence MYAQEAQQKP…GEEEAGEHME (64 aa). Composition is skewed to basic and acidic residues over residues 23-33 and 45-64; these read KPAEEQAKPEQ and ELSE…EHME. Residues 85-105 form a helical membrane-spanning segment; the sequence is SYWIAMAFNFAIVFALLGWAM.

The protein belongs to the ATPase B chain family. As to quaternary structure, F-type ATPases have 2 components, F(1) - the catalytic core - and F(0) - the membrane proton channel. F(1) has five subunits: alpha(3), beta(3), gamma(1), delta(1), epsilon(1). F(0) has three main subunits: a(1), b(2) and c(10-14). The alpha and beta chains form an alternating ring which encloses part of the gamma chain. F(1) is attached to F(0) by a central stalk formed by the gamma and epsilon chains, while a peripheral stalk is formed by the delta and b chains.

It is found in the cell inner membrane. In terms of biological role, f(1)F(0) ATP synthase produces ATP from ADP in the presence of a proton or sodium gradient. F-type ATPases consist of two structural domains, F(1) containing the extramembraneous catalytic core and F(0) containing the membrane proton channel, linked together by a central stalk and a peripheral stalk. During catalysis, ATP synthesis in the catalytic domain of F(1) is coupled via a rotary mechanism of the central stalk subunits to proton translocation. Functionally, component of the F(0) channel, it forms part of the peripheral stalk, linking F(1) to F(0). In Koribacter versatilis (strain Ellin345), this protein is ATP synthase subunit b.